Here is a 58-residue protein sequence, read N- to C-terminus: MAEVRLGENESIDSAIRRFKKKIQKAGILSEVKRRERYEKPSLRRKRKAEAARKGGRY.

The segment at 38 to 58 (YEKPSLRRKRKAEAARKGGRY) is disordered. A compositionally biased stretch (basic and acidic residues) spans 49 to 58 (AEAARKGGRY).

It belongs to the bacterial ribosomal protein bS21 family.

The chain is Small ribosomal subunit protein bS21C (rpsU3) from Nostoc sp. (strain PCC 7120 / SAG 25.82 / UTEX 2576).